Reading from the N-terminus, the 440-residue chain is Frizzled/smoothened-like sans CRD protein D (440 aa).

A signal peptide spans 1 to 27 (MFIILKFLISFFLICNFFNYNDHFASG). Residues 28-85 (QTLPPGFCPSPLIYRNSTNRQNDIENGYLFIGQTNCTSPCPSLIFSENEWHRVYNMSL) are Extracellular-facing. N-linked (GlcNAc...) asparagine glycans are attached at residues Asn-43, Asn-62, and Asn-82. The helical transmembrane segment at 86-106 (IAGTISMFALIFLIITYSPLV) threads the bilayer. At 107-110 (NKYN) the chain is on the cytoplasmic side. Residues 111–131 (GYTRHTVGILFLFCGIFLTVT) form a helical membrane-spanning segment. At 132–162 (TDGRQLWDIDLGFEKYCPEPGRFARQSDTKC) the chain is on the extracellular side. The helical transmembrane segment at 163-183 (LVTAIFFQYGCVTSILWWAAI) threads the bilayer. Residues 184–200 (SVDLWMTIRKVKISKLQ) lie on the Cytoplasmic side of the membrane. Residues 201-221 (FITYAVILNIITLILTFAPIA) form a helical membrane-spanning segment. The Extracellular segment spans residues 222 to 244 (SKQYGYGEAAIGCWLMDLKYQVG). The chain crosses the membrane as a helical span at residues 245–265 (YFWAPVGFCLCVGCVSIVLII). Residues 266-285 (REIYKVSDAIKKKLLAKHLK) lie on the Cytoplasmic side of the membrane. The chain crosses the membrane as a helical span at residues 286–306 (PLMLIILMLSEFIYMFIFYSY). At 307 to 346 (TTSRRGHYHDVVEKYIRCLFINASNPSICEVDVSISSPAH) the chain is on the extracellular side. Asn-328 is a glycosylation site (N-linked (GlcNAc...) asparagine). The chain crosses the membrane as a helical span at residues 347-367 (FFFHFCMRLMGIEGLIFFGFT). Over 368 to 440 (RQTKRIWLRS…IELSGVDSKN (73 aa)) the chain is Cytoplasmic. A disordered region spans residues 395–428 (ISSDEKTSNSSHRTTRGCRETEFGESIEQSNDPE).

This sequence belongs to the G-protein coupled receptor Fz/Smo family.

The protein resides in the membrane. The protein is Frizzled/smoothened-like sans CRD protein D (fscD) of Dictyostelium discoideum (Social amoeba).